The following is a 389-amino-acid chain: MVYVNAKNYFCDSIINNTDRVLSALIKYHGLSIIAVFLLAIGLFHVALKVVSYVAVLLDVFVLPPTNYLPYGSQRGAWAVVTGASDGIGKEYARQLGLRGFNVFLISRTESKLRELAQEIAEKSKVETKFLAIDVSTDSPQNYKDIETVLETIPSVSILINNVGLSHSIPTPFLETPPAELHNIIAINNLATLKITQLIAPKIVESVKEARATKKFQKGLILTMGSFGGLLPTPLLATYSGSKAFLQHWSNALAVELAPEHVDVELVVSYLVTSAMSKVRKTSALIPNPKQFVTATLSSVGRAGGAQEKFATSTPYWSHALLHWWIAQTVGVFSKLVAGFNYKMHVDIRKRALKKQARQAAGGVADPKNTTAAREGYATESLKNETLKH.

Residues 34 to 54 (IAVFLLAIGLFHVALKVVSYV) traverse the membrane as a helical segment. The NADP(+) site is built by Val80, Asp134, Asn162, Tyr239, Lys243, Val272, and Ser274. The active-site Proton donor is the Tyr239. Lys243 functions as the Lowers pKa of active site Tyr in the catalytic mechanism. A disordered region spans residues 359–389 (QAAGGVADPKNTTAAREGYATESLKNETLKH).

Belongs to the short-chain dehydrogenases/reductases (SDR) family.

The protein resides in the endoplasmic reticulum membrane. The catalysed reaction is a very-long-chain (3R)-3-hydroxyacyl-CoA + NADP(+) = a very-long-chain 3-oxoacyl-CoA + NADPH + H(+). Its pathway is lipid metabolism; fatty acid biosynthesis. In terms of biological role, component of the microsomal membrane bound fatty acid elongation system, which produces the 26-carbon very long-chain fatty acids (VLCFA) from palmitate. Catalyzes the reduction of the 3-ketoacyl-CoA intermediate that is formed in each cycle of fatty acid elongation. VLCFAs serve as precursors for ceramide and sphingolipids. The chain is Very-long-chain 3-oxoacyl-CoA reductase from Yarrowia lipolytica (strain CLIB 122 / E 150) (Yeast).